We begin with the raw amino-acid sequence, 326 residues long: Polyprenal reductase (326 aa).

Helical transmembrane passes span 26-46 (MMFG…TFVE), 84-104 (HFYT…VSTV), 167-187 (INLS…IALL), 212-232 (ILYL…NMIL), and 256-276 (LFNL…FCIA).

It belongs to the steroid 5-alpha reductase family. Polyprenal reductase subfamily.

The protein localises to the endoplasmic reticulum membrane. It catalyses the reaction a di-trans,poly-cis-dolichal + NADP(+) = a di-trans,poly-cis-polyprenal + NADPH + H(+). It participates in protein modification; protein glycosylation. Plays a key role in early steps of protein N-linked glycosylation by being involved in the conversion of polyprenol into dolichol. Acts as a polyprenal reductase that mediates the reduction of polyprenal into dolichal in a NADP-dependent mechanism. Dolichols are required for the synthesis of dolichol-linked monosaccharides and the oligosaccharide precursor used for N-glycosylation. This Drosophila melanogaster (Fruit fly) protein is Polyprenal reductase.